The primary structure comprises 88 residues: Small ribosomal subunit protein bS20 (88 aa).

The segment covering 1–22 has biased composition (basic residues); that stretch reads MANIKSSKKRSIQSEKKRKYNS. The interval 1-26 is disordered; it reads MANIKSSKKRSIQSEKKRKYNSSKKS.

This sequence belongs to the bacterial ribosomal protein bS20 family.

Its function is as follows. Binds directly to 16S ribosomal RNA. The protein is Small ribosomal subunit protein bS20 of Wigglesworthia glossinidia brevipalpis.